A 716-amino-acid chain; its full sequence is Segment polarity protein dishevelled homolog DVL-3 (716 aa).

Residues 1 to 82 (MGETKIIYHL…RVVSWLVSAE (82 aa)) enclose the DIX domain. Arginine 27 carries the omega-N-methylarginine modification. Phosphoserine occurs at positions 48 and 125. Positions 85 to 235 (HPDPAPFCAD…VSRIERSSSF (151 aa)) are disordered. Positions 142–156 (QRERPRRRDGPEHAT) are enriched in basic and acidic residues. Positions 175–190 (SSSTLMSSELETTSFF) are enriched in low complexity. The residue at position 192 (serine 192) is a Phosphoserine. The span at 199 to 212 (SRFSSSTEQSSASR) shows a compositional bias: low complexity. Omega-N-methylarginine is present on arginine 212. Over residues 213–226 (LMRRHKRRRRKQKV) the composition is skewed to basic residues. In terms of domain architecture, PDZ spans 249-321 (TVTLNMEKYN…NDDAVRVLRE (73 aa)). The residue at position 271 (arginine 271) is an Asymmetric dimethylarginine; by PRMT1; alternate. Residues arginine 271 and arginine 342 each carry the symmetric dimethylarginine; by PRMT7; alternate modification. Position 342 is an omega-N-methylarginine; alternate (arginine 342). A Phosphothreonine modification is found at threonine 346. In terms of domain architecture, DEP spans 422 to 496 (PESGLEVRDR…SEQCYYIFGD (75 aa)). Residues 546 to 691 (PYNPHPGFPE…PPGRDLASVP (146 aa)) are disordered. Residues 565-581 (ASSQHSEGSRSSGSNRS) are compositionally biased toward low complexity. Basic and acidic residues-rich tracts occupy residues 582–595 (GSDRRKEKDPKAGD) and 604–622 (ESDHTTRSSLRGPRERAPS). Arginine 614 carries the post-translational modification Symmetric dimethylarginine; by PRMT7. Pro residues predominate over residues 653-682 (YGPPGVPPLYGPPMLMMPPPPAAMGPPGAP). Serine 697 is subject to Phosphoserine. Arginine 698 is subject to Omega-N-methylarginine; alternate. At arginine 698 the chain carries Dimethylated arginine; alternate. Serine 700 is modified (phosphoserine).

It belongs to the DSH family. Interacts (via the PDZ domain) with the C-terminal regions of VANGL1 and VANGL2. Interacts (via the region containing both the PDZ and DEP domains) with LRRFIP2; the DIX domain may inhibit this interaction. Interacts with CYLD, CEP164 and DAB2. Interacts with DCDC2. Interacts with FOXK1 and FOXK2. Interacts with DAAM2. Post-translationally, ubiquitinated. Deubiquitinated by CYLD, which acts on 'Lys-63'-linked ubiquitin chains. Phosphorylated by CSNK1D. In terms of processing, arginine methylation may function as a switch in regulation of function in Wnt signaling.

It is found in the cytoplasm. Its function is as follows. Involved in the signal transduction pathway mediated by multiple Wnt genes. The chain is Segment polarity protein dishevelled homolog DVL-3 (DVL3) from Homo sapiens (Human).